The chain runs to 179 residues: Adenine phosphoribosyltransferase (179 aa).

The protein belongs to the purine/pyrimidine phosphoribosyltransferase family. In terms of assembly, homodimer.

It localises to the cytoplasm. It catalyses the reaction AMP + diphosphate = 5-phospho-alpha-D-ribose 1-diphosphate + adenine. Its pathway is purine metabolism; AMP biosynthesis via salvage pathway; AMP from adenine: step 1/1. Functionally, catalyzes a salvage reaction resulting in the formation of AMP, that is energically less costly than de novo synthesis. In Haemophilus ducreyi (strain 35000HP / ATCC 700724), this protein is Adenine phosphoribosyltransferase.